Here is a 368-residue protein sequence, read N- to C-terminus: PPE family immunomodulator PPE68 (368 aa).

Disordered stretches follow at residues 255–280 and 312–368; these read LGTS…LLRA and AAAG…EDDW. Residues 312–327 show a composition bias toward low complexity; that stretch reads AAAGSSATGGAAPVGA. Residues 354–368 are compositionally biased toward acidic residues; it reads REEDDEDDWDEEDDW.

Belongs to the mycobacterial PPE family. Homodimer. Interacts with PE35. PE35/PPE68 complex interacts with human TLR2.

It is found in the secreted. The protein localises to the cell wall. Its subcellular location is the cell membrane. It localises to the cell surface. In terms of biological role, plays a major role in RD1-associated pathogenesis, and may contribute to the establishment and maintenance of M.tuberculosis infection. Together with PE35, stimulates the secretion of IL-10 and MCP-1 from human macrophages, via the interaction with human Toll-like receptor 2 (TLR2). This is PPE family immunomodulator PPE68 (PPE68) from Mycobacterium tuberculosis (strain CDC 1551 / Oshkosh).